A 216-amino-acid chain; its full sequence is MRYITIALAKGRLAKKAMEIFEQIGIPCEEMKDEKTRKLIFTNEELGFRFFLSKPSDVPTYVEYGAADIGIVGKDTILEEGRSLYEVYDLQMGKCRMCVCGPESAREKLQHHELIRVASKYPNIAKDYFNNIKHQTVEIIKLNGSVELAPIVGLAEVIVDIVETGATLRENGLEVLEEVCPLSARMVVNQVSMKMEQERINKLINDVKKYIETQGR.

It belongs to the ATP phosphoribosyltransferase family. Short subfamily. As to quaternary structure, heteromultimer composed of HisG and HisZ subunits.

The protein localises to the cytoplasm. It catalyses the reaction 1-(5-phospho-beta-D-ribosyl)-ATP + diphosphate = 5-phospho-alpha-D-ribose 1-diphosphate + ATP. Its pathway is amino-acid biosynthesis; L-histidine biosynthesis; L-histidine from 5-phospho-alpha-D-ribose 1-diphosphate: step 1/9. Its function is as follows. Catalyzes the condensation of ATP and 5-phosphoribose 1-diphosphate to form N'-(5'-phosphoribosyl)-ATP (PR-ATP). Has a crucial role in the pathway because the rate of histidine biosynthesis seems to be controlled primarily by regulation of HisG enzymatic activity. The chain is ATP phosphoribosyltransferase from Lachnospira eligens (strain ATCC 27750 / DSM 3376 / VPI C15-48 / C15-B4) (Eubacterium eligens).